The sequence spans 635 residues: Threonine--tRNA ligase (635 aa).

One can recognise a TGS domain in the interval 1–61 (MINISFPDGS…ENDCKLRILT (61 aa)). The catalytic stretch occupies residues 242–533 (DHRKLGKELD…LIEEYAGCFP (292 aa)). Residues Cys-333, His-384, and His-510 each coordinate Zn(2+).

The protein belongs to the class-II aminoacyl-tRNA synthetase family. In terms of assembly, homodimer. The cofactor is Zn(2+).

It localises to the cytoplasm. The catalysed reaction is tRNA(Thr) + L-threonine + ATP = L-threonyl-tRNA(Thr) + AMP + diphosphate + H(+). Catalyzes the attachment of threonine to tRNA(Thr) in a two-step reaction: L-threonine is first activated by ATP to form Thr-AMP and then transferred to the acceptor end of tRNA(Thr). Also edits incorrectly charged L-seryl-tRNA(Thr). The sequence is that of Threonine--tRNA ligase from Rickettsia akari (strain Hartford).